The following is a 153-amino-acid chain: Aspartate carbamoyltransferase regulatory chain (153 aa).

4 residues coordinate Zn(2+): C109, C114, C138, and C141.

Belongs to the PyrI family. Contains catalytic and regulatory chains. Zn(2+) is required as a cofactor.

Its function is as follows. Involved in allosteric regulation of aspartate carbamoyltransferase. This Salmonella arizonae (strain ATCC BAA-731 / CDC346-86 / RSK2980) protein is Aspartate carbamoyltransferase regulatory chain.